The sequence spans 586 residues: NudC domain-containing protein 1 (586 aa).

Residues 259–278 (KDQPESSEDEKMDEDNKREP) form a disordered region. Residues 275–364 (KREPLYNWHQ…EPGSTWAELV (90 aa)) enclose the CS domain.

The protein resides in the cytoplasm. The protein localises to the nucleus. This is NudC domain-containing protein 1 from Xenopus tropicalis (Western clawed frog).